The chain runs to 335 residues: Beta-ketoacyl-[acyl-carrier-protein] synthase III (335 aa).

Active-site residues include Cys-120 and His-261. The tract at residues 262–266 (QANER) is ACP-binding. The active site involves Asn-291.

This sequence belongs to the thiolase-like superfamily. FabH family. As to quaternary structure, homodimer.

It is found in the cytoplasm. It catalyses the reaction malonyl-[ACP] + acetyl-CoA + H(+) = 3-oxobutanoyl-[ACP] + CO2 + CoA. It participates in lipid metabolism; fatty acid biosynthesis. In terms of biological role, catalyzes the condensation reaction of fatty acid synthesis by the addition to an acyl acceptor of two carbons from malonyl-ACP. Catalyzes the first condensation reaction which initiates fatty acid synthesis and may therefore play a role in governing the total rate of fatty acid production. Possesses both acetoacetyl-ACP synthase and acetyl transacylase activities. Its substrate specificity determines the biosynthesis of branched-chain and/or straight-chain of fatty acids. The chain is Beta-ketoacyl-[acyl-carrier-protein] synthase III from Chlamydia pneumoniae (Chlamydophila pneumoniae).